A 527-amino-acid chain; its full sequence is Peptide chain release factor 3 (527 aa).

Positions 11–278 (AKRRTFAIIS…GFVEWAPAPL (268 aa)) constitute a tr-type G domain. GTP is bound by residues 20–27 (SHPDAGKT), 87–91 (DTPGH), and 141–144 (NKMD).

This sequence belongs to the TRAFAC class translation factor GTPase superfamily. Classic translation factor GTPase family. PrfC subfamily.

The protein localises to the cytoplasm. Functionally, increases the formation of ribosomal termination complexes and stimulates activities of RF-1 and RF-2. It binds guanine nucleotides and has strong preference for UGA stop codons. It may interact directly with the ribosome. The stimulation of RF-1 and RF-2 is significantly reduced by GTP and GDP, but not by GMP. The polypeptide is Peptide chain release factor 3 (Teredinibacter turnerae (strain ATCC 39867 / T7901)).